An 803-amino-acid chain; its full sequence is Zinc finger and BTB domain-containing protein 17 (803 aa).

The BTB domain maps to 1–104 (MDFPQHSQHV…VATFLQMQDI (104 aa)). Residues 116-295 (EPATSPGGNA…GLRSGTYGDR (180 aa)) form a disordered region. Phosphoserine is present on serine 120. Residues 132–142 (GGDKRAKEEKV) are compositionally biased toward basic and acidic residues. Composition is skewed to low complexity over residues 171–180 (GQAQSAASGA) and 206–217 (AAAEAEAALSES). Acidic residues-rich tracts occupy residues 233 to 244 (EQKEQEEQEEEG) and 261 to 272 (EAPEENENEESA). The interval 269 to 308 (EESAGTDSGQELGSEARGLRSGTYGDRTESKAYGSVIHKC) is interaction with MYC. 13 consecutive C2H2-type zinc fingers follow at residues 306 to 328 (HKCEDCGKEFTHTGNFKRHIRIH), 334 to 356 (FSCRECSKAFSDPAACKAHEKTH), 362 to 384 (YGCEECGKSYRLISLLNLHKKRH), 390 to 412 (YRCEDCGKLFTTSGNLKRHQLVH), 418 to 440 (YQCDYCGRSFSDPTSKMRHLETH), 446 to 468 (HKCPHCDKKFNQVGNLKAHLKIH), 474 to 496 (LKCRECGKQFTTSGNLKRHLRIH), 502 to 524 (YVCIHCQRQFADPGALQRHVRIH), 530 to 552 (CQCVMCGKAFTQASSLIAHVRQH), 558 to 580 (YVCERCGKRFVQSSQLANHIRHH), 586 to 608 (HKCSVCSKAFVNVGDLSKHIIIH), 614 to 637 (YLCDKCGRGFNRVDNLRSHVKTVH), and 717 to 739 (YACDSCGDKFLDANSLAQHVRIH). Lysine 397 is covalently cross-linked (Glycyl lysine isopeptide (Lys-Gly) (interchain with G-Cter in ubiquitin)). Lysine 481 is covalently cross-linked (Glycyl lysine isopeptide (Lys-Gly) (interchain with G-Cter in ubiquitin)). The tract at residues 637-718 (HQGKAGIKIL…EDPNTHILYA (82 aa)) is interaction with MYC. An interaction with HCFC1 region spans residues 637–803 (HQGKAGIKIL…TAPECPPPAE (167 aa)). The interval 779 to 803 (RDGAEGQPALAETSPTAPECPPPAE) is disordered.

Belongs to the krueppel C2H2-type zinc-finger protein family. As to quaternary structure, homooligomerizes (via the BTB/POZ domain), multimerization is required for DNA binding. Interacts (via the C-terminal zinc fingers) with GIF1; the interaction results in the recruitment of MYB to the CDKN1A/p21 and CDKN1B promoters and repression of transcription. Interacts with TRAF2, interfering with the binding of UBC13 to TRAF2, and inhibiting TRAF2 E3 ligase activity. Interacts with MYC (via the C-terminal helix-loop-helix motif); the interaction inhibits ZBTB17 transactivation and growth arrest activities and renders it insoluble in the nucleus. Also interacts with HCFC1, MAGEA4 and TMPRSS11A. Interacts with BCL6; the interaction inhibits ZBTB17 transactivation activity on target genes involved in cell cycle arrest. Interacts with ZBTB49 isoform 3/ZNF509S1; this interaction blocks ZBTB17-mediated repression of RB1. In terms of processing, undergoes 'Lys-48'-linked polyubiquitination at Lys-397 and Lys-481 and subsequent proteasomal degradation in a TRAF2-dependent manner. Expressed in germinal center B-cells.

It localises to the nucleus. Transcription factor that can function as an activator or repressor depending on its binding partners, and by targeting negative regulators of cell cycle progression. Plays a critical role in early lymphocyte development, where it is essential to prevent apoptosis in lymphoid precursors, allowing them to survive in response to IL7 and undergo proper lineage commitment. Has been shown to bind to the promoters of adenovirus major late protein and cyclin D1 and activate transcription. Required for early embryonic development during gastrulation. Represses RB1 transcription; this repression can be blocked by interaction with ZBTB49 isoform 3/ZNF509S1. The chain is Zinc finger and BTB domain-containing protein 17 (ZBTB17) from Homo sapiens (Human).